A 447-amino-acid chain; its full sequence is Probable glycine dehydrogenase (decarboxylating) subunit 1 (447 aa).

This sequence belongs to the GcvP family. N-terminal subunit subfamily. In terms of assembly, the glycine cleavage system is composed of four proteins: P, T, L and H. In this organism, the P 'protein' is a heterodimer of two subunits.

The catalysed reaction is N(6)-[(R)-lipoyl]-L-lysyl-[glycine-cleavage complex H protein] + glycine + H(+) = N(6)-[(R)-S(8)-aminomethyldihydrolipoyl]-L-lysyl-[glycine-cleavage complex H protein] + CO2. Functionally, the glycine cleavage system catalyzes the degradation of glycine. The P protein binds the alpha-amino group of glycine through its pyridoxal phosphate cofactor; CO(2) is released and the remaining methylamine moiety is then transferred to the lipoamide cofactor of the H protein. The protein is Probable glycine dehydrogenase (decarboxylating) subunit 1 of Maricaulis maris (strain MCS10) (Caulobacter maris).